We begin with the raw amino-acid sequence, 2541 residues long: Talin-1 (2541 aa).

Positions 86-403 (RPLKIRMLDG…GYIDIILKKK (318 aa)) constitute an FERM domain. Positions 280–435 (FMAHKNCGNM…PKKSTVLQQQ (156 aa)) are interaction with LAYN. Residues 482–655 (RGHMPPLTSA…QTSGELLQQI (174 aa)) are helical bundle R1. The tract at residues 656–786 (GESDTDPRFQ…ALNDLLQHIK (131 aa)) is helical bundle R2. The tract at residues 787–911 (QHATGGQPIG…NAAAQNAIKK (125 aa)) is helical bundle R3. The segment at 913–1043 (LVHKLEHAAK…RTAAQKAQEA (131 aa)) is helical bundle R4. The helical bundle R5 stretch occupies residues 1045–1205 (GPLEIDSALG…NRCVNCLPGQ (161 aa)). Residues 1206-1356 (RDVDAAIRMV…QLITMCTQQA (151 aa)) are helical bundle R6. A helical bundle R7A region spans residues 1357–1452 (PGQKECDNAL…AYLVGVSDPN (96 aa)). An interaction with VCL and F-actin region spans residues 1358–1658 (GQKECDNALR…NMRDKAPGQR (301 aa)). Positions 1460–1579 (LVDPTQFARA…NLTAFASNPE (120 aa)) are helical bundle R8. O-linked (GlcNAc) threonine glycosylation is present at Thr-1486. Residues 1580–1652 (FATVPAQISP…IKKLITNMRD (73 aa)) form a helical bundle R7B region. Residues 1654 to 1821 (APGQRECDEA…TLNEAASAAG (168 aa)) are helical bundle R9. A helical bundle R10 region spans residues 1822–1972 (VVGGMVDSIT…VLAALQAGNR (151 aa)). The O-linked (GlcNAc) threonine glycan is linked to Thr-1889. The helical bundle R11 stretch occupies residues 1973 to 2139 (GTQACITAAS…TVKAVEDEAT (167 aa)). A helical bundle R12 region spans residues 2140-2293 (KGTRALEATI…QAAEAMKGTE (154 aa)). The 240-residue stretch at 2292 to 2531 (TEWVDPEDPT…MIRQQQYKFL (240 aa)) folds into the I/LWEQ domain. Positions 2299 to 2481 (DPTVIAENEL…AAQKAAAFQD (183 aa)) are helical bundle R13.

As to quaternary structure, interacts with PIP5K1C and NRAP. Binds with high affinity to vinculin VCL and with low affinity to integrins. Interacts with APBB1IP; this inhibits VCL binding. Interacts with F-actin. Interacts with LAYN. Interacts with THSD1. In terms of processing, phosphorylated.

Its subcellular location is the cell projection. It is found in the ruffle membrane. The protein localises to the cytoplasm. It localises to the cytoskeleton. The protein resides in the cell surface. Its subcellular location is the cell junction. It is found in the focal adhesion. Functionally, high molecular weight cytoskeletal protein concentrated at regions of cell-substratum contact and, in lymphocytes, at cell-cell contacts. Involved in connections of major cytoskeletal structures to the plasma membrane. The polypeptide is Talin-1 (TLN1) (Gallus gallus (Chicken)).